The following is a 457-amino-acid chain: Probable cytosolic Fe-S cluster assembly factor oxy-4 (457 aa).

C25 serves as a coordination point for [4Fe-4S] cluster. The disordered stretch occupies residues 38 to 59; sequence KEESQVNIRTKKPKDKESSKTE. C71, C74, C77, C176, C232, C380, and C384 together coordinate [4Fe-4S] cluster.

This sequence belongs to the NARF family.

In terms of biological role, component of the cytosolic iron-sulfur (Fe/S) protein assembly machinery. Required for maturation of extramitochondrial Fe/S proteins. This Caenorhabditis elegans protein is Probable cytosolic Fe-S cluster assembly factor oxy-4 (oxy-4).